The primary structure comprises 462 residues: Microspherule protein 1 (462 aa).

The residue at position 1 (Met-1) is an N-acetylmethionine. The disordered stretch occupies residues 1-130; the sequence is MDKDSQGLLD…KSKQPLQVTK (130 aa). Phosphoserine is present on Ser-22. Basic residues predominate over residues 43 to 55; the sequence is PKRRSSSRFIKRK. Ser-102 is modified (phosphoserine). The residue at position 103 (Thr-103) is a Phosphothreonine. Over residues 103-112 the composition is skewed to pro residues; sequence TPVPPSPAPA. Ser-108 is modified (phosphoserine). Residues 113–123 carry the Nuclear localization signal motif; that stretch reads PGLTKRVKKSK. N6-acetyllysine occurs at positions 123 and 130. The residue at position 282 (Ser-282) is a Phosphoserine. A coiled-coil region spans residues 301–335; that stretch reads LEHELMVADRRQKREIRQLEQELHKWQVLVDSITG. The region spanning 363–419 is the FHA domain; the sequence is ITLGRATKDNQIDVDLSLEGPAWKISRKQGVIKLKNNGDFFIANEGRRPIYIDGRPV. Residues 389–396 carry the UBR5-degron motif; the sequence is RKQGVIKL.

In terms of assembly, component of the chromatin remodeling INO80 complex; specifically part of a complex module associated with the N-terminus of INO80. Component of some MLL1/MLL complex, at least composed of the core components KMT2A/MLL1, ASH2L, HCFC1, WDR5 and RBBP5, as well as the facultative components BACC1, CHD8, E2F6, HSP70, INO80C, KANSL1, LAS1L, MAX, MCRS1, MGA, KAT8/MOF, PELP1, PHF20, PRP31, RING2, RUVB1/TIP49A, RUVB2/TIP49B, SENP3, TAF1, TAF4, TAF6, TAF7, TAF9 and TEX10. Component of the NSL complex at least composed of MOF/KAT8, KANSL1, KANSL2, KANSL3, MCRS1, PHF20, OGT1/OGT, WDR5 and HCFC1. Interacts with NOP2. Interacts with PINX1. Interacts with TERT. Interacts with CCDC85B. Interacts with DAXX. Interacts (via N-terminus) with FMR1 (via phosphorylated form). Interacts with FXR1 and FXR2. Interacts (via C-terminus) with NDE1 (via C-terminus); phosphorylation of NDE1 inhibits the interaction. Interacts (via C-terminus) with ZNF375. Interacts (via C-terminus) with active GTP-bound RHEB (via N-terminus) under conditions of high amino acid concentration; the interaction promotes mTORC1 complex activation by RHEB. Interacts (via N-terminus) with the mTORC1 complex; the interaction ensures mTORC1 activation by RHEB. Interacts with DYNC1I1; the interaction is required for the proper distribution of centriolar satellites. Interacts with TTBK2; the interaction is required for recruitment of TTBK2 to the mother centriole. Interacts with KIF2A; the interaction occurs during mitosis and facilitates chromosome alignment. As to quaternary structure, (Microbial infection) Interacts with Herpes simplex virus ICP22. Ubiquitinated by UBR5 when not assembled in the INO80 complex, leading to its degradation: UBR5 recognizes and binds a degron that is not accessible when MCRS1 is part of the INO80 complex. In terms of processing, phosphorylated by AURKA on Ser-35 and/or Ser-36 during mitosis which is required for kinetochore fiber assembly and mitotic progression but not for spindle localization or for chromosome-induced microtuble aster formation. Also phosphorylated by AURKA on Ser-85 and/or Ser-87. Phosphorylated by TTK/MPS1 which enhances recruitment of KIF2A to the minus end of spindle microtubules and facilitates precise chromosome segregation. As to expression, detected in testis, and at lower levels in spleen, thymus, prostate, uterus, small intestine, colon and leukocytes.

It is found in the nucleus. It localises to the nucleolus. The protein resides in the cytoplasm. The protein localises to the cytoskeleton. Its subcellular location is the microtubule organizing center. It is found in the centrosome. It localises to the spindle pole. The protein resides in the chromosome. The protein localises to the centromere. Its subcellular location is the kinetochore. It is found in the lysosome. It localises to the centriolar satellite. Functionally, modulates the transcription repressor activity of DAXX by recruiting it to the nucleolus. As part of the NSL complex, may be involved in acetylation of nucleosomal histone H4 on several lysine residues. Putative regulatory component of the chromatin remodeling INO80 complex which is involved in transcriptional regulation, DNA replication and probably DNA repair. May also be an inhibitor of TERT telomerase activity. Binds to G-quadruplex structures in mRNA. Binds to RNA homomer poly(G) and poly(U). Maintains RHEB at the lysosome in its active GTP-bound form and prevents its interaction with the mTORC1 complex inhibitor TSC2, ensuring activation of the mTORC1 complex by RHEB. Stabilizes the minus ends of kinetochore fibers by protecting them from depolymerization, ensuring functional spindle assembly during mitosis. Following phosphorylation by TTK/MPS1, enhances recruitment of KIF2A to the minus ends of mitotic spindle microtubules which promotes chromosome alignment. Regulates the morphology of microtubule minus ends in mitotic spindle by maintaining them in a closed conformation characterized by the presence of an electron-dense cap. Regulates G2/M transition and spindle assembly during oocyte meiosis. Mediates histone modifications and transcriptional regulation in germinal vesicle oocytes which are required for meiotic progression. Also regulates microtubule nucleation and spindle assembly by activating aurora kinases during oocyte meiosis. Contributes to the establishment of centriolar satellites and also plays a role in primary cilium formation by recruiting TTBK2 to the mother centriole which is necessary for removal of the CP110 cap from the mother centriole, an early step in ciliogenesis. Required for epiblast development during early embryogenesis. Essential for cell viability. The chain is Microspherule protein 1 (MCRS1) from Homo sapiens (Human).